The chain runs to 466 residues: Alpha-1A adrenergic receptor (466 aa).

Topologically, residues 1-27 (MVLLSENASEGSNCTHPPAPVNISKAI) are extracellular. Asn-7, Asn-13, and Asn-22 each carry an N-linked (GlcNAc...) asparagine glycan. Residues 28 to 51 (LLGVILGGLIIFGVLGNILVILSV) form a helical membrane-spanning segment. The Cytoplasmic segment spans residues 52 to 64 (ACHRHLHSVTHYY). Residues 65 to 88 (IVNLAVADLLLTSTVLPFSAIFEI) traverse the membrane as a helical segment. The Extracellular portion of the chain corresponds to 89 to 99 (LGYWAFGRVFC). An intrachain disulfide couples Cys-99 to Cys-176. A helical membrane pass occupies residues 100-122 (NIWAAVDVLCCTASIMGLCIISI). Topologically, residues 123–143 (DRYIGVSYPLRYPTIVTQRRG) are cytoplasmic. A helical membrane pass occupies residues 144-167 (VRALLCVWVLSLVISIGPLFGWRQ). The Extracellular portion of the chain corresponds to 168–181 (PAPEDETICQINEE). A helical transmembrane segment spans residues 182–205 (PGYVLFSALGSFYVPLAIILVMYC). Residues 206 to 273 (RVYVVAKRES…FSREKKAAKT (68 aa)) are Cytoplasmic-facing. Phosphoserine; by PKA is present on Ser-215. A helical membrane pass occupies residues 274–297 (LGIVVGCFVLCWLPFFLVMPIGSF). The Extracellular portion of the chain corresponds to 298-305 (FPDFKPSE). Residues 306–329 (TVFKIVFWLGYLNSCINPIIYPCS) traverse the membrane as a helical segment. Residues 330-466 (SQEFKKAFQN…ISLGENGEEV (137 aa)) are Cytoplasmic-facing. Positions 334–349 (KKAFQNVLRIQCLRRR) match the Nuclear localization signal motif. Cys-345 carries the S-palmitoyl cysteine lipid modification.

Belongs to the G-protein coupled receptor 1 family. Adrenergic receptor subfamily. ADRA1A sub-subfamily. As to quaternary structure, homo- and heterooligomer. Heterooligomerizes with ADRA1B homooligomers in cardiac myocytes. Interacts with CAVIN4. In terms of processing, C-terminal Ser or Thr residues may be phosphorylated. In terms of tissue distribution, abundant in heart, brain, aorta, vena cava, vas deferens, submaxillary gland, lung, and kidney. Found at lower levels in prostate, parotid gland and skeletal muscle.

The protein localises to the nucleus membrane. It localises to the cell membrane. Its subcellular location is the cytoplasm. The protein resides in the membrane. It is found in the caveola. This alpha-adrenergic receptor mediates its action by association with G proteins that activate a phosphatidylinositol-calcium second messenger system. Its effect is mediated by G(q) and G(11) proteins. Nuclear ADRA1A-ADRA1B heterooligomers regulate phenylephrine (PE)-stimulated ERK signaling in cardiac myocytes. The sequence is that of Alpha-1A adrenergic receptor (Adra1a) from Rattus norvegicus (Rat).